A 298-amino-acid chain; its full sequence is MVFGQVVIGPPGSGKTTYCNGMSQFLSLMGRKVAIVNLDPANDALPYECGVNIEELIKLEDVMSEHSLGPNGGLVYCMEYLEKNIDWLESKLKPLLKDHYILFDFPGQVELFFIHDSTKNVLTKLIKSLNLRLTAVQLIDSHLCCDPGNYVSSLLLSLSTMLHMELPHVNVLSKIDLIGSYGKLAFNLDFYTDVQDLSYLEHHLSQDPRSAKYRKLTKELCSVIEDYSLVNFTTLDIQDKESVGDLVKLIDKSNGYIFAGIDASVVEYSKIAIGQTDWDYNRVAAVQEKYMEDEEIQD.

12–17 lines the GTP pocket; the sequence is GSGKTT. The Gly-Pro-Asn (GPN)-loop; involved in dimer interface motif lies at 69 to 71; sequence GPN. 173–176 provides a ligand contact to GTP; it reads SKID.

The protein belongs to the GPN-loop GTPase family. Heterodimer with QQT2. In terms of tissue distribution, expressed in vascular tissues, root tips, apical and root meristematic regions, and floral primordia.

The protein resides in the cytoplasm. It is found in the nucleus. It localises to the cytoskeleton. The protein localises to the spindle. Its subcellular location is the phragmoplast. In terms of biological role, small GTPase that is essential for the correct formation of the tangential divisions in early embryos. Associates with microtubule during mitosis and may function in the positioning of the division plane. May participate in the patterning of the early embryo at the octant-dermatogen transition. Is crucial for normal development of the plant. The protein is GPN-loop GTPase QQT1 of Arabidopsis thaliana (Mouse-ear cress).